A 149-amino-acid polypeptide reads, in one-letter code: Large-conductance mechanosensitive channel (149 aa).

3 helical membrane-spanning segments follow: residues 16-36 (VMDLAVGVIIGGAFSTIVNSV), 40-60 (LIMPVVGVATGGLDFSNKFIL), and 89-109 (GSFITVAINFVILALIIFMMV).

It belongs to the MscL family. As to quaternary structure, homopentamer.

It is found in the cell inner membrane. In terms of biological role, channel that opens in response to stretch forces in the membrane lipid bilayer. May participate in the regulation of osmotic pressure changes within the cell. The chain is Large-conductance mechanosensitive channel from Paraburkholderia phymatum (strain DSM 17167 / CIP 108236 / LMG 21445 / STM815) (Burkholderia phymatum).